A 360-amino-acid chain; its full sequence is Aminomethyltransferase (360 aa).

It belongs to the GcvT family. The glycine cleavage system is composed of four proteins: P, T, L and H.

The enzyme catalyses N(6)-[(R)-S(8)-aminomethyldihydrolipoyl]-L-lysyl-[protein] + (6S)-5,6,7,8-tetrahydrofolate = N(6)-[(R)-dihydrolipoyl]-L-lysyl-[protein] + (6R)-5,10-methylene-5,6,7,8-tetrahydrofolate + NH4(+). In terms of biological role, the glycine cleavage system catalyzes the degradation of glycine. This chain is Aminomethyltransferase, found in Flavobacterium psychrophilum (strain ATCC 49511 / DSM 21280 / CIP 103535 / JIP02/86).